The sequence spans 247 residues: Probable transcriptional regulatory protein PBPRA1113 (247 aa).

The protein belongs to the TACO1 family.

It is found in the cytoplasm. This chain is Probable transcriptional regulatory protein PBPRA1113, found in Photobacterium profundum (strain SS9).